We begin with the raw amino-acid sequence, 320 residues long: o-succinylbenzoate synthase (320 aa).

Catalysis depends on Lys133, which acts as the Proton donor. Mg(2+)-binding residues include Asp161, Glu190, and Asp213. Catalysis depends on Lys235, which acts as the Proton acceptor.

Belongs to the mandelate racemase/muconate lactonizing enzyme family. MenC type 1 subfamily. A divalent metal cation is required as a cofactor.

The catalysed reaction is (1R,6R)-6-hydroxy-2-succinyl-cyclohexa-2,4-diene-1-carboxylate = 2-succinylbenzoate + H2O. Its pathway is quinol/quinone metabolism; 1,4-dihydroxy-2-naphthoate biosynthesis; 1,4-dihydroxy-2-naphthoate from chorismate: step 4/7. The protein operates within quinol/quinone metabolism; menaquinone biosynthesis. In terms of biological role, converts 2-succinyl-6-hydroxy-2,4-cyclohexadiene-1-carboxylate (SHCHC) to 2-succinylbenzoate (OSB). In Salmonella heidelberg (strain SL476), this protein is o-succinylbenzoate synthase.